Here is a 78-residue protein sequence, read N- to C-terminus: Antitoxin FitA (78 aa).

As to quaternary structure, homodimer in the absence of FitB; forms a heterodimer with FitB; 4 FitAB heterodimers form a complex that binds to fitAB promoter DNA. The complex is also seen in solution.

Functionally, antitoxin component of a type II toxin-antitoxin (TA) system. Plays a role in the speed with which bacteria traverse human epithelial cells; disruption of the locus increases the speed of trafficking about 2-4-fold. Binds to its own promoter, binding affinity of the FitAB complex is 20-30-fold higher than FitA alone. No nuclease activity was observed for the FitAB complex, perhaps because FitA (the antitoxin) prevents metal binding and thus catalysis by FitB. This chain is Antitoxin FitA (fitA), found in Neisseria gonorrhoeae (strain ATCC 700825 / FA 1090).